Reading from the N-terminus, the 833-residue chain is Translation initiation factor IF-2 (833 aa).

Residues 1–247 (MTEDVKKADG…ALQQAFTKPA (247 aa)) form a disordered region. 2 stretches are compositionally biased toward basic and acidic residues: residues 53–99 (QKAE…EAKK) and 110–152 (VDVE…RYAE). Positions 153-166 (LSEEDAENENSEDY) are enriched in acidic residues. The segment covering 187–203 (KENRNRGGKNKVAKAKK) has biased composition (basic residues). The segment covering 204-227 (GGREDESSKTERESNRRNQKDGKM) has biased composition (basic and acidic residues). The tr-type G domain occupies 333–502 (TRAPVVTIMG…LLQSEVLELT (170 aa)). The segment at 342–349 (GHVDHGKT) is G1. 342-349 (GHVDHGKT) serves as a coordination point for GTP. The segment at 367–371 (GITQH) is G2. The tract at residues 388-391 (DTPG) is G3. GTP contacts are provided by residues 388 to 392 (DTPGH) and 442 to 445 (NKID). The G4 stretch occupies residues 442 to 445 (NKID). Positions 478–480 (SAK) are G5.

This sequence belongs to the TRAFAC class translation factor GTPase superfamily. Classic translation factor GTPase family. IF-2 subfamily.

Its subcellular location is the cytoplasm. In terms of biological role, one of the essential components for the initiation of protein synthesis. Protects formylmethionyl-tRNA from spontaneous hydrolysis and promotes its binding to the 30S ribosomal subunits. Also involved in the hydrolysis of GTP during the formation of the 70S ribosomal complex. The sequence is that of Translation initiation factor IF-2 (infB) from Pasteurella multocida (strain Pm70).